The primary structure comprises 712 residues: Matrix metalloproteinase-9 (712 aa).

The N-terminal stretch at 1–19 is a signal peptide; that stretch reads MSPLQPLVLALLVLACCSA. A propeptide spans 20–106 (activation peptide); it reads VPRRRQPTVV…PRCGVPDVGR (87 aa). Residue asparagine 38 is glycosylated (N-linked (GlcNAc...) asparagine). Positions 97 to 104 match the Cysteine switch motif; it reads PRCGVPDV. Cysteine 99 is a binding site for Zn(2+). N-linked (GlcNAc...) asparagine glycosylation is found at asparagine 120 and asparagine 127. Ca(2+) contacts are provided by aspartate 131 and aspartate 165. 2 residues coordinate Zn(2+): histidine 175 and aspartate 177. The Ca(2+) site is built by aspartate 182, glycine 183, asparagine 185, and leucine 187. Residue histidine 190 coordinates Zn(2+). 3 residues coordinate Ca(2+): glycine 197, glutamine 199, and aspartate 201. Position 203 (histidine 203) interacts with Zn(2+). Residues aspartate 205, aspartate 206, and glutamate 208 each coordinate Ca(2+). Fibronectin type-II domains follow at residues 225-273, 283-331, and 342-390; these read AKGA…FCPS, ADGK…FCPT, and AAGE…FCPD. 6 disulfide bridges follow: cysteine 230-cysteine 256, cysteine 244-cysteine 271, cysteine 288-cysteine 314, cysteine 302-cysteine 329, cysteine 347-cysteine 373, and cysteine 361-cysteine 388. Histidine 401 lines the Zn(2+) pocket. The active site involves glutamate 402. Zn(2+) is bound by residues histidine 405 and histidine 411. Positions 440–519 are disordered; it reads QHLYGPRPEP…PTESPDPAED (80 aa). Over residues 455-465 the composition is skewed to low complexity; the sequence is TTTTTTTTEPQ. A compositionally biased stretch (pro residues) spans 491 to 504; it reads TGPPAAGPTGPPTA. The segment covering 505–514 has biased composition (low complexity); that stretch reads GPSAAPTESP. Cysteine 521 and cysteine 709 are oxidised to a cystine. 4 Hemopexin repeats span residues 523–568, 569–613, 615–662, and 663–709; these read VDIF…WPAL, PRKL…GLGP, VAQV…FPGV, and PIST…LLKC.

The protein belongs to the peptidase M10A family. In terms of assembly, exists as monomer or homodimer; disulfide-linked. Also exists as heterodimer with LCN2. Macrophages and transformed cell lines produce only the monomeric form. Interacts with ECM1. Zn(2+) serves as cofactor. Ca(2+) is required as a cofactor. N- and O-glycosylated.

Its subcellular location is the secreted. The protein localises to the extracellular space. It is found in the extracellular matrix. It carries out the reaction Cleavage of gelatin types I and V and collagen types IV and V.. Its function is as follows. Matrix metalloproteinase that plays an essential role in local proteolysis of the extracellular matrix and in leukocyte migration. Could play a role in bone osteoclastic resorption. Cleaves KiSS1 at a Gly-|-Leu bond. Cleaves NINJ1 to generate the Secreted ninjurin-1 form. Cleaves type IV and type V collagen into large C-terminal three quarter fragments and shorter N-terminal one quarter fragments. Degrades fibronectin but not laminin or Pz-peptide. This is Matrix metalloproteinase-9 from Bos taurus (Bovine).